The chain runs to 100 residues: Aspartyl/glutamyl-tRNA(Asn/Gln) amidotransferase subunit C (100 aa).

This sequence belongs to the GatC family. As to quaternary structure, heterotrimer of A, B and C subunits.

The catalysed reaction is L-glutamyl-tRNA(Gln) + L-glutamine + ATP + H2O = L-glutaminyl-tRNA(Gln) + L-glutamate + ADP + phosphate + H(+). The enzyme catalyses L-aspartyl-tRNA(Asn) + L-glutamine + ATP + H2O = L-asparaginyl-tRNA(Asn) + L-glutamate + ADP + phosphate + 2 H(+). Allows the formation of correctly charged Asn-tRNA(Asn) or Gln-tRNA(Gln) through the transamidation of misacylated Asp-tRNA(Asn) or Glu-tRNA(Gln) in organisms which lack either or both of asparaginyl-tRNA or glutaminyl-tRNA synthetases. The reaction takes place in the presence of glutamine and ATP through an activated phospho-Asp-tRNA(Asn) or phospho-Glu-tRNA(Gln). The polypeptide is Aspartyl/glutamyl-tRNA(Asn/Gln) amidotransferase subunit C (Rickettsia canadensis (strain McKiel)).